The following is a 634-amino-acid chain: Coilin (634 aa).

3 disordered regions span residues 87–135 (VSPA…IAEN), 149–276 (PGPS…KLSQ), and 342–361 (GAKS…DSTL). Residues 152–181 (SVQSKLLTNKGTPKAPETQTEVSNMSANIE) show a composition bias toward polar residues. 2 stretches are compositionally biased toward basic and acidic residues: residues 223-234 (TLKEGKMSESKN) and 251-272 (KENE…KIPD).

The protein belongs to the coilin family. As to expression, in egg chambers expressed in the follicle cells, nurse cells and oocyte. Expressed in the larval brain, salivary glands, fat bodies and in the somatic hub cells at the tip of the testis. Expressed in the spermatogonia and spermatocytes, and in the adult ejaculatory duct (at protein level). Expressed in the adult Malpighian tubules.

It localises to the nucleus. The protein localises to the nucleoplasm. Its subcellular location is the cajal body. It is found in the chromosome. The protein resides in the centromere. It localises to the cytoplasm. The protein localises to the cytoskeleton. Its subcellular location is the spindle. Component of nuclear coiled bodies, also known as Cajal bodies or CBs, which are involved in the modification and assembly of nucleoplasmic snRNPs. Required for Cajal body formation. The chain is Coilin from Drosophila melanogaster (Fruit fly).